We begin with the raw amino-acid sequence, 281 residues long: Nicotinamide/nicotinic acid mononucleotide adenylyltransferase 1 (281 aa).

Residues glycine 15 and serine 16 each coordinate beta-nicotinamide D-ribonucleotide. Residues glycine 15, serine 16, phenylalanine 17, and methionine 23 each coordinate NAD(+). 15–17 (GSF) provides a ligand contact to ATP. Histidine 24 is a binding site for ATP. Beta-nicotinamide D-ribonucleotide contacts are provided by tyrosine 55 and lysine 57. Lysine 57 provides a ligand contact to NAD(+). Lysine 58 lines the ATP pocket. Beta-nicotinamide D-ribonucleotide contacts are provided by tryptophan 92 and threonine 95. Tryptophan 92 and threonine 95 together coordinate NAD(+). Residues 113–143 (PQQNSPVLEKPGRKRKWAEQKQDISEKKSLE) are disordered. Serine 117 bears the Phosphoserine mark. The short motif at 123–129 (PGRKRKW) is the Nuclear localization signal element. The span at 129 to 143 (WAEQKQDISEKKSLE) shows a compositional bias: basic and acidic residues. Residues glycine 158, aspartate 160, leucine 170, tryptophan 171, glutamate 217, and asparagine 221 each contribute to the NAD(+) site. 158–160 (GAD) is an ATP binding site. Beta-nicotinamide D-ribonucleotide is bound by residues leucine 170 and tryptophan 171. Residue 226-229 (TKIR) coordinates ATP.

It belongs to the eukaryotic NMN adenylyltransferase family. As to quaternary structure, homohexamer. Interacts with ADPRT/PARP1. The cofactor is Zn(2+). Requires Mg(2+) as cofactor.

It localises to the nucleus. The enzyme catalyses beta-nicotinamide D-ribonucleotide + ATP + H(+) = diphosphate + NAD(+). It catalyses the reaction nicotinate beta-D-ribonucleotide + ATP + H(+) = deamido-NAD(+) + diphosphate. It functions in the pathway cofactor biosynthesis; NAD(+) biosynthesis; NAD(+) from nicotinamide D-ribonucleotide: step 1/1. It participates in cofactor biosynthesis; NAD(+) biosynthesis; deamido-NAD(+) from nicotinate D-ribonucleotide: step 1/1. Activity is strongly inhibited by galotannin. Inhibited by P1-(adenosine-5')-P4-(nicotinic-acid-riboside-5')-tetraphosphate (Nap4AD). Functionally, catalyzes the formation of NAD(+) from nicotinamide mononucleotide (NMN) and ATP. Can also use the deamidated form; nicotinic acid mononucleotide (NaMN) as substrate with the same efficiency. Can use triazofurin monophosphate (TrMP) as substrate. Also catalyzes the reverse reaction, i.e. the pyrophosphorolytic cleavage of NAD(+). For the pyrophosphorolytic activity, prefers NAD(+) and NaAD as substrates and degrades NADH, nicotinic acid adenine dinucleotide phosphate (NHD) and nicotinamide guanine dinucleotide (NGD) less effectively. Involved in the synthesis of ATP in the nucleus, together with PARP1, PARG and NUDT5. Nuclear ATP generation is required for extensive chromatin remodeling events that are energy-consuming. Fails to cleave phosphorylated dinucleotides NADP(+), NADPH and NaADP(+). Also acts as a cofactor for glutamate and aspartate ADP-ribosylation by directing PARP1 catalytic activity to glutamate and aspartate residues on histones. Protects against axonal degeneration following mechanical or toxic insults. Delays axonal degeneration after axotomy. Results in a &gt;10-fold increase in intact neurites 72 hours after injury. Neural protection does not correlate with cellular NAD(+) levels but may still require enzyme activity. In Bos taurus (Bovine), this protein is Nicotinamide/nicotinic acid mononucleotide adenylyltransferase 1 (NMNAT1).